Reading from the N-terminus, the 262-residue chain is Snake venom serine protease catroxase-1 (262 aa).

The first 18 residues, 1–18 (MVLIRVLANLLILQLSYA), serve as a signal peptide directing secretion. Positions 19–24 (QKSSEP) are excised as a propeptide. Residues 25–250 (IIGGDECNRN…HLDWIQSIIA (226 aa)) enclose the Peptidase S1 domain. 6 disulfides stabilise this stretch: Cys-31–Cys-162, Cys-49–Cys-65, Cys-97–Cys-257, Cys-141–Cys-211, Cys-173–Cys-190, and Cys-201–Cys-226. The active-site Charge relay system is His-64. Asn-102 carries N-linked (GlcNAc...) asparagine glycosylation. Residue Asp-109 is the Charge relay system of the active site. N-linked (GlcNAc...) asparagine glycosylation is present at Asn-169. The active-site Charge relay system is the Ser-205.

It belongs to the peptidase S1 family. Snake venom subfamily. In terms of assembly, monomer. As to expression, expressed by the venom gland.

The protein localises to the secreted. Functionally, snake venom serine protease that may act in the hemostasis system of the prey. The protein is Snake venom serine protease catroxase-1 of Crotalus atrox (Western diamondback rattlesnake).